The following is a 368-amino-acid chain: CCA-adding enzyme (368 aa).

ATP is bound by residues G8 and R11. 2 residues coordinate CTP: G8 and R11. Mg(2+)-binding residues include D21 and D23. Residues R91, R137, and R140 each contribute to the ATP site. Residues R91, R137, and R140 each contribute to the CTP site.

The protein belongs to the tRNA nucleotidyltransferase/poly(A) polymerase family. Bacterial CCA-adding enzyme type 2 subfamily. It depends on Mg(2+) as a cofactor.

The catalysed reaction is a tRNA precursor + 2 CTP + ATP = a tRNA with a 3' CCA end + 3 diphosphate. It carries out the reaction a tRNA with a 3' CCA end + 2 CTP + ATP = a tRNA with a 3' CCACCA end + 3 diphosphate. In terms of biological role, catalyzes the addition and repair of the essential 3'-terminal CCA sequence in tRNAs without using a nucleic acid template. Adds these three nucleotides in the order of C, C, and A to the tRNA nucleotide-73, using CTP and ATP as substrates and producing inorganic pyrophosphate. tRNA 3'-terminal CCA addition is required both for tRNA processing and repair. Also involved in tRNA surveillance by mediating tandem CCA addition to generate a CCACCA at the 3' terminus of unstable tRNAs. While stable tRNAs receive only 3'-terminal CCA, unstable tRNAs are marked with CCACCA and rapidly degraded. The chain is CCA-adding enzyme from Pseudomonas putida (strain ATCC 700007 / DSM 6899 / JCM 31910 / BCRC 17059 / LMG 24140 / F1).